Here is a 195-residue protein sequence, read N- to C-terminus: CASP-like protein 1B2 (195 aa).

Residues 1-25 are Cytoplasmic-facing; that stretch reads MDLEKGKKPSEQAAACRIMQVKDKL. Residues 26–46 traverse the membrane as a helical segment; that stretch reads ITLQPVVRACVFLATAVAAVI. At 47 to 78 the chain is on the extracellular side; the sequence is MGLNKQSYTTVVAIVGTRPVTQTFTAKFKDTP. Residues 79 to 99 traverse the membrane as a helical segment; that stretch reads AFVFFVIANAIASGYNLMVLV. At 100–114 the chain is on the cytoplasmic side; that stretch reads TRRILQRRAQSLSVH. A helical transmembrane segment spans residues 115–135; sequence LLDMVILTLLATGSATAASMA. Topologically, residues 136 to 160 are extracellular; the sequence is QLGKNGNLHARWNPICDKFGSFCNH. Residues 161–181 form a helical membrane-spanning segment; that stretch reads GGIALVSSFIGVALMLALNLL. The Cytoplasmic segment spans residues 182–195; that stretch reads SAAANSPRSNVTGQ.

The protein belongs to the Casparian strip membrane proteins (CASP) family. Homodimer and heterodimers.

It localises to the cell membrane. The polypeptide is CASP-like protein 1B2 (Oryza sativa subsp. indica (Rice)).